A 398-amino-acid polypeptide reads, in one-letter code: Enoyl-[acyl-carrier-protein] reductase [NADH] (398 aa).

Residues 48-53, 74-75, 111-112, and 139-140 contribute to the NAD(+) site; these read GASTGY, FE, DA, and LA. Position 225 (Y225) interacts with substrate. Y235 (proton donor) is an active-site residue. NAD(+)-binding positions include K244 and 273-275; that span reads VVT.

Belongs to the TER reductase family. In terms of assembly, monomer.

It catalyses the reaction a 2,3-saturated acyl-[ACP] + NAD(+) = a (2E)-enoyl-[ACP] + NADH + H(+). Its pathway is lipid metabolism; fatty acid biosynthesis. In terms of biological role, involved in the final reduction of the elongation cycle of fatty acid synthesis (FAS II). Catalyzes the reduction of a carbon-carbon double bond in an enoyl moiety that is covalently linked to an acyl carrier protein (ACP). This Paraburkholderia xenovorans (strain LB400) protein is Enoyl-[acyl-carrier-protein] reductase [NADH].